Here is a 448-residue protein sequence, read N- to C-terminus: GTPase Der (448 aa).

EngA-type G domains are found at residues 3–167 (PVIA…EPPE) and 182–355 (TRLA…ASAT). Residues 9–16 (GRPNVGKS), 56–60 (DTGGF), 119–122 (NKAE), 188–195 (GRPNVGKS), 235–239 (DTAGL), and 300–303 (NKWD) each bind GTP. In terms of domain architecture, KH-like spans 356-440 (RKLPTPQLTR…PMRIELRASH (85 aa)).

It belongs to the TRAFAC class TrmE-Era-EngA-EngB-Septin-like GTPase superfamily. EngA (Der) GTPase family. Associates with the 50S ribosomal subunit.

In terms of biological role, GTPase that plays an essential role in the late steps of ribosome biogenesis. The protein is GTPase Der of Leptothrix cholodnii (strain ATCC 51168 / LMG 8142 / SP-6) (Leptothrix discophora (strain SP-6)).